The chain runs to 64 residues: Large ribosomal subunit protein bL35 (64 aa).

Residues 1-26 (MPKIKTHRGAAKRFKKTGTGKIKRSK) are compositionally biased toward basic residues. The tract at residues 1–48 (MPKIKTHRGAAKRFKKTGTGKIKRSKAYASHLLGGKSPKRKRNLRKAG) is disordered.

It belongs to the bacterial ribosomal protein bL35 family.

The polypeptide is Large ribosomal subunit protein bL35 (Syntrophomonas wolfei subsp. wolfei (strain DSM 2245B / Goettingen)).